A 527-amino-acid polypeptide reads, in one-letter code: Peptide chain release factor 3 (527 aa).

Residues 9–277 (AKRRTFAIIS…AVVDWAPKPL (269 aa)) enclose the tr-type G domain. Residues 18-25 (SHPDAGKT), 86-90 (DTPGH), and 140-143 (NKLD) contribute to the GTP site.

It belongs to the TRAFAC class translation factor GTPase superfamily. Classic translation factor GTPase family. PrfC subfamily.

The protein resides in the cytoplasm. In terms of biological role, increases the formation of ribosomal termination complexes and stimulates activities of RF-1 and RF-2. It binds guanine nucleotides and has strong preference for UGA stop codons. It may interact directly with the ribosome. The stimulation of RF-1 and RF-2 is significantly reduced by GTP and GDP, but not by GMP. The chain is Peptide chain release factor 3 from Stutzerimonas stutzeri (strain A1501) (Pseudomonas stutzeri).